The chain runs to 209 residues: Claudin-4 (209 aa).

At methionine 1–threonine 9 the chain is on the cytoplasmic side. Positions methionine 1–lysine 103 are interaction with EPHA2. A helical transmembrane segment spans residues glycine 10–tryptophan 30. Residues arginine 31–arginine 81 are Extracellular-facing. A disulfide bond links cysteine 54 and cysteine 64. A helical membrane pass occupies residues alanine 82–glycine 102. The Cytoplasmic segment spans residues lysine 103 to threonine 117. The helical transmembrane segment at methionine 118 to tryptophan 138 threads the bilayer. Topologically, residues threonine 139 to methionine 160 are extracellular. A helical transmembrane segment spans residues glycine 161–leucine 181. The Cytoplasmic portion of the chain corresponds to cysteine 182–valine 209. At tyrosine 208 the chain carries Phosphotyrosine; by EPHA2. An interactions with TJP1, TJP2 and TJP3 region spans residues tyrosine 208–valine 209.

Belongs to the claudin family. Interacts with EPHA2; phosphorylates CLDN4 and may regulate tight junctions. Directly interacts with TJP1/ZO-1, TJP2/ZO-2 and TJP3/ZO-3. Interacts with CLDN1. Interacts with CLDN8. Phosphorylated. Phosphorylation by EPHA2 is stimulated by EFNA1 and alters interaction with TJP1.

The protein localises to the cell junction. The protein resides in the tight junction. It localises to the cell membrane. Functionally, channel-forming tight junction protein that mediates paracellular chloride transport in the kidney. Plays a critical role in the paracellular reabsorption of filtered chloride in the kidney collecting ducts. Claudins play a major role in tight junction-specific obliteration of the intercellular space, through calcium-independent cell-adhesion activity. This Chlorocebus aethiops (Green monkey) protein is Claudin-4 (CLDN4).